The chain runs to 1403 residues: DNA-directed RNA polymerase subunit beta' (1403 aa).

Positions 68, 70, 83, and 86 each coordinate Zn(2+). 3 residues coordinate Mg(2+): Asp-459, Asp-461, and Asp-463. Positions 814, 887, 894, and 897 each coordinate Zn(2+).

It belongs to the RNA polymerase beta' chain family. As to quaternary structure, the RNAP catalytic core consists of 2 alpha, 1 beta, 1 beta' and 1 omega subunit. When a sigma factor is associated with the core the holoenzyme is formed, which can initiate transcription. Requires Mg(2+) as cofactor. It depends on Zn(2+) as a cofactor.

It catalyses the reaction RNA(n) + a ribonucleoside 5'-triphosphate = RNA(n+1) + diphosphate. In terms of biological role, DNA-dependent RNA polymerase catalyzes the transcription of DNA into RNA using the four ribonucleoside triphosphates as substrates. This Solibacter usitatus (strain Ellin6076) protein is DNA-directed RNA polymerase subunit beta'.